A 1966-amino-acid chain; its full sequence is Probable serine/threonine-protein kinase vps15 (1966 aa).

In terms of domain architecture, Protein kinase spans 21 to 303; sequence IVFKKSLGNA…QYFSFAHQFI (283 aa). ATP-binding positions include 27–35 and K49; that span reads LGNARFLKT. The active-site Proton acceptor is the D144. Residues 362-407 are disordered; that stretch reads PILISNNNNNNNNNNNNNNNNNNNNNNNNNNNNNNNNNQTTTTTTN. Over residues 367–407 the composition is skewed to low complexity; that stretch reads NNNNNNNNNNNNNNNNNNNNNNNNNNNNNNNNNQTTTTTTN. 4 HEAT repeats span residues 558–596, 604–642, 717–754, and 756–793; these read CRLQ…MVQT, IFGQ…TAKR, KTNE…VVGA, and SLES…LGLL. 4 disordered regions span residues 916–937, 1036–1062, 1106–1130, and 1190–1263; these read SFNS…TGGS, SSSN…TNST, GGIT…TGLN, and TSLS…NNMN. Low complexity-rich tracts occupy residues 1106-1119 and 1192-1263; these read GGIT…TTLG and LSNS…NNMN. 4 WD repeats span residues 1460–1499, 1508–1547, 1564–1605, and 1610–1649; these read EHKA…KSVT, QQEG…KQKN, TTRG…DAFN, and ASLG…PLYS. The disordered stretch occupies residues 1699-1743; that stretch reads RSYEQPPQQQPQQPQPPQQQQQQQSQMNRSINMTSSTTTTTTSSY. Composition is skewed to low complexity over residues 1703-1722 and 1732-1742; these read QPPQ…QQQQ and TSSTTTTTTSS. WD repeat units lie at residues 1790 to 1829 and 1935 to 1966; these read KPTP…QSYY and HHQE…KVWK.

The protein belongs to the protein kinase superfamily. Ser/Thr protein kinase family.

The enzyme catalyses L-seryl-[protein] + ATP = O-phospho-L-seryl-[protein] + ADP + H(+). The catalysed reaction is L-threonyl-[protein] + ATP = O-phospho-L-threonyl-[protein] + ADP + H(+). The sequence is that of Probable serine/threonine-protein kinase vps15 (vps15) from Dictyostelium discoideum (Social amoeba).